The sequence spans 276 residues: Large ribosomal subunit protein uL2 (276 aa).

The disordered stretch occupies residues 221–276 (RGSAMNPNDHPHGGGEGRAPIGRKSPMTPWGKKARGVKTRDRKKASNALIIRRRKK). Residues 252–276 (KKARGVKTRDRKKASNALIIRRRKK) are compositionally biased toward basic residues.

This sequence belongs to the universal ribosomal protein uL2 family. As to quaternary structure, part of the 50S ribosomal subunit. Forms a bridge to the 30S subunit in the 70S ribosome.

One of the primary rRNA binding proteins. Required for association of the 30S and 50S subunits to form the 70S ribosome, for tRNA binding and peptide bond formation. It has been suggested to have peptidyltransferase activity; this is somewhat controversial. Makes several contacts with the 16S rRNA in the 70S ribosome. The protein is Large ribosomal subunit protein uL2 of Aster yellows witches'-broom phytoplasma (strain AYWB).